A 539-amino-acid polypeptide reads, in one-letter code: MTSNRSTRSSTKREEVSKNGVEKRELDESDVMKNGKKPVKRAKVSSLPKPVRVPGSAKRINKIPELPTERLNVYVFGSGSMNELGMGEEEMDVVYRPRLNPILSTDKVGVVDLAVGGMHSAALSHDGRVYTWGVNDDYALGRLTKDQKDENGDKVDNDLLEGTPSKVEGALSHLRVTKVICSDNLTAAITDNGCCFTWGTFRCSDGVLGYSDSQKRTAEPTQMRLPEICQLATGTDHIIALTTTGKVYTWGNGQQFQLGRRMLERRRLQGLTPQPLALKNIISVGAGSYHSFAIDNKGRVYAWGLNITRQCGIEVEDEEEGAVITKPTLVDALEGYNVKSITGGEHHTLALLEDGRVLAWGRDDRHQLGIPDNALPETVVKDEKGNNYYLSTPTIIPGLTNVIQVVCGTHHNLAVTSDGKVYSWGSAENYEVGQGDNDEDVAVPTLVRSKAIKEVAIRVAGAGGQFSIIAGIPNASEEPVANGIKSEPENEKKLKTEETSKTDDSPVTDAKPDVTSNGEPSTATSESKDSVLEPSSTTA.

The interval 1–53 is disordered; sequence MTSNRSTRSSTKREEVSKNGVEKRELDESDVMKNGKKPVKRAKVSSLPKPVRV. A compositionally biased stretch (basic and acidic residues) spans 11–33; sequence TKREEVSKNGVEKRELDESDVMK. A compositionally biased stretch (basic residues) spans 34 to 43; it reads NGKKPVKRAK. RCC1 repeat units follow at residues 70-125, 127-191, 192-243, 244-296, 298-353, 354-417, and 419-472; these read RLNV…ALSH, GRVY…AITD, NGCC…ALTT, TGKV…AIDN, GRVY…ALLE, DGRV…AVTS, and GKVY…IAGI. The disordered stretch occupies residues 478–539; sequence EPVANGIKSE…SVLEPSSTTA (62 aa). Over residues 486–504 the composition is skewed to basic and acidic residues; that stretch reads SEPENEKKLKTEETSKTDD. Positions 514–525 are enriched in polar residues; the sequence is VTSNGEPSTATS.

Oligomer of dis3, pim1 and spi1. Interacts with ned1.

It is found in the nucleus. Its function is as follows. Promotes the exchange of Ran(spi1)-bound GDP by GTP. Involved in the control of mitosis. Regulates a variety of nuclear events, including mitotic check-point, chromosome decondensation and mRNA processing/transport. The protein is Protein pim1 (pim1) of Schizosaccharomyces pombe (strain 972 / ATCC 24843) (Fission yeast).